The following is a 62-amino-acid chain: Large ribosomal subunit protein uL29 (62 aa).

Belongs to the universal ribosomal protein uL29 family.

The sequence is that of Large ribosomal subunit protein uL29 from Syntrophotalea carbinolica (strain DSM 2380 / NBRC 103641 / GraBd1) (Pelobacter carbinolicus).